The chain runs to 214 residues: Osteoclast-stimulating factor 1 (214 aa).

In terms of domain architecture, SH3 spans 12-71 (GQVKVYRALFTFDPRTPDELYFEEGDILYISDTSDSNWWKGTCRGRTGLIPSNYVAEQAE). ANK repeat units follow at residues 72–101 (SIDN…GING), 105–135 (AGNT…ELNQ), and 139–168 (LGDT…RTDV).

It is found in the cytoplasm. Induces bone resorption, acting probably through a signaling cascade which results in the secretion of factor(s) enhancing osteoclast formation and activity. In Danio rerio (Zebrafish), this protein is Osteoclast-stimulating factor 1 (ostf1).